The following is an 84-amino-acid chain: Magnetosome protein MamR (84 aa).

The protein belongs to the magnetosome MamR family.

Its subcellular location is the magnetosome. Functionally, may play a role in controlling magnetite number and size but not in control of magnetite morphology. The chain is Magnetosome protein MamR from Paramagnetospirillum magneticum (strain ATCC 700264 / AMB-1) (Magnetospirillum magneticum).